The sequence spans 363 residues: Suberization-associated anionic peroxidase (363 aa).

A signal peptide spans 1-20 (MGFRLSHLSLALSFVALALA). Asn36 is a glycosylation site (N-linked (GlcNAc...) asparagine). 2 disulfides stabilise this stretch: Cys80–Cys159 and Cys111–Cys116. The active-site Proton acceptor is His109. Residues Asp110, Val113, Gly115, and Asp117 each contribute to the Ca(2+) site. N-linked (GlcNAc...) asparagine glycosylation is found at Asn126, Asn161, and Asn199. 2 cysteine pairs are disulfide-bonded: Cys166–Cys352 and Cys245–Cys264. Residue Pro208 coordinates substrate. N-linked (GlcNAc...) asparagine glycans are attached at residues Asn213 and Asn225. Residue His238 coordinates heme b. Position 239 (Thr239) interacts with Ca(2+). Asn263 is a glycosylation site (N-linked (GlcNAc...) asparagine). Residues Asp277, Thr279, and Asp284 each contribute to the Ca(2+) site.

It belongs to the peroxidase family. Classical plant (class III) peroxidase subfamily. It depends on Ca(2+) as a cofactor. The cofactor is heme b.

Its subcellular location is the secreted. The enzyme catalyses 2 a phenolic donor + H2O2 = 2 a phenolic radical donor + 2 H2O. In terms of biological role, removal of H(2)O(2), oxidation of toxic reductants, biosynthesis and degradation of lignin, suberization, auxin catabolism, response to environmental stresses such as wounding, pathogen attack and oxidative stress. These functions might be dependent on each isozyme/isoform in each plant tissue. Functionally, suggested to catalyze the deposition of the aromatic residues of suberin on the cell wall and thus play a role in cell-suberization. The protein is Suberization-associated anionic peroxidase of Solanum tuberosum (Potato).